Here is a 581-residue protein sequence, read N- to C-terminus: uncharacterized protein (581 aa).

The signal sequence occupies residues 1–28 (MDSKAVSPLIGFVLMLAIIMGLIGIMQA).

This is an uncharacterized protein from Archaeoglobus fulgidus (strain ATCC 49558 / DSM 4304 / JCM 9628 / NBRC 100126 / VC-16).